Consider the following 95-residue polypeptide: Mitochondrial import inner membrane translocase subunit Tim9 (95 aa).

The Twin CX3C motif motif lies at 35 to 59; that stretch reads CFTDCIRDFTTRDVKDSEEKCSLNC. Intrachain disulfides connect cysteine 35/cysteine 59 and cysteine 39/cysteine 55.

It belongs to the small Tim family. As to quaternary structure, heterohexamer; composed of 3 copies of Tim9 and 3 copies of Tim10, named soluble 70 kDa complex. The complex associates with the Tim22 component of the TIM22 complex. Interacts with multi-pass transmembrane proteins in transit.

It localises to the mitochondrion inner membrane. Its function is as follows. Mitochondrial intermembrane chaperone that participates in the import and insertion of multi-pass transmembrane proteins into the mitochondrial inner membrane. May also be required for the transfer of beta-barrel precursors from the TOM complex to the sorting and assembly machinery (SAM complex) of the outer membrane. Acts as a chaperone-like protein that protects the hydrophobic precursors from aggregation and guide them through the mitochondrial intermembrane space. This Drosophila melanogaster (Fruit fly) protein is Mitochondrial import inner membrane translocase subunit Tim9 (Tim9a).